A 198-amino-acid chain; its full sequence is Golgi to ER traffic protein 1 (198 aa).

Residues 1 to 6 (MDPFSI) lie on the Lumenal side of the membrane. The chain crosses the membrane as a helical span at residues 7 to 26 (LLTLTLIILAQNAVRIVGKS). Over 27–110 (QIHQSIWNLY…AIEKYLGLAI (84 aa)) the chain is Cytoplasmic. Residues 73–106 (KWTKLNRKYDQLQTEIKAVSDQVSQQQQAIEKYL) are a coiled coil. The chain crosses the membrane as a helical span at residues 111–131 (SVTTTLPLWLFRFKYRKQPLF). Residues 132–155 (YFPKDTFPSYLEWILSFPSVPQGS) are Lumenal-facing. The chain crosses the membrane as a helical span at residues 156 to 172 (IGIMFWILLLNKFVSNL). The Cytoplasmic portion of the chain corresponds to 173–198 (EFIVKTFSTKVEKPVPIVKVEDLSPK).

The protein belongs to the WRB/GET1 family. As to quaternary structure, component of the Golgi to ER traffic (GET) complex, which is composed of GET1, GET2 and GET3. Within the complex, GET1 and GET2 form a heterotetramer which is stabilized by phosphatidylinositol binding and which binds to the GET3 homodimer.

The protein localises to the endoplasmic reticulum membrane. It localises to the golgi apparatus membrane. Its function is as follows. Required for the post-translational delivery of tail-anchored (TA) proteins to the endoplasmic reticulum. Together with GET2, acts as a membrane receptor for soluble GET3, which recognizes and selectively binds the transmembrane domain of TA proteins in the cytosol. The GET complex cooperates with the HDEL receptor ERD2 to mediate the ATP-dependent retrieval of resident ER proteins that contain a C-terminal H-D-E-L retention signal from the Golgi to the ER. In Komagataella phaffii (strain GS115 / ATCC 20864) (Yeast), this protein is Golgi to ER traffic protein 1.